Reading from the N-terminus, the 443-residue chain is Transmembrane protein 184C (443 aa).

7 helical membrane passes run 15 to 35 (LVVL…IWKL), 46 to 66 (AWFI…WGIL), 84 to 104 (ILWM…YPDI), 182 to 202 (PVTT…EGDF), 210 to 230 (YLVI…VLFY), 252 to 272 (VVFV…AGVI), and 284 to 304 (VATG…AVAH). The segment covering 369 to 378 (TSLLSSSTQD) has biased composition (polar residues). The disordered stretch occupies residues 369-422 (TSLLSSSTQDPISAASSIPPSPSGHYQGFGQTITPQTTPTATTMPEELYSADSP). Residues 399-411 (QTITPQTTPTATT) are compositionally biased toward low complexity.

Belongs to the TMEM184 family.

It is found in the membrane. Its function is as follows. May play a role in cell growth. The chain is Transmembrane protein 184C (tmem184c) from Xenopus tropicalis (Western clawed frog).